A 194-amino-acid chain; its full sequence is Peptidyl-tRNA hydrolase (194 aa).

Tyrosine 17 is a tRNA binding site. Histidine 22 (proton acceptor) is an active-site residue. Residues phenylalanine 68, asparagine 70, and asparagine 116 each contribute to the tRNA site.

It belongs to the PTH family. In terms of assembly, monomer.

The protein resides in the cytoplasm. It carries out the reaction an N-acyl-L-alpha-aminoacyl-tRNA + H2O = an N-acyl-L-amino acid + a tRNA + H(+). Its function is as follows. Hydrolyzes ribosome-free peptidyl-tRNAs (with 1 or more amino acids incorporated), which drop off the ribosome during protein synthesis, or as a result of ribosome stalling. In terms of biological role, catalyzes the release of premature peptidyl moieties from peptidyl-tRNA molecules trapped in stalled 50S ribosomal subunits, and thus maintains levels of free tRNAs and 50S ribosomes. This Proteus mirabilis (strain HI4320) protein is Peptidyl-tRNA hydrolase.